The sequence spans 80 residues: DNA-directed RNA polymerase RPB10 homolog (80 aa).

Positions 7, 10, 65, and 66 each coordinate Zn(2+).

This sequence belongs to the archaeal RpoN/eukaryotic RPB10 RNA polymerase subunit family. In terms of assembly, part of the viral DNA-directed RNA polymerase that consists of 8 polII-like subunits (RPB1, RPB2, RPB3, RPB5, RPB6, RPB7, RPB9, RPB10), a capping enzyme and a termination factor.

It is found in the host cytoplasm. In terms of biological role, component of the DNA-directed RNA polymerase (RNAP) that catalyzes the transcription in the cytoplasm of viral DNA into RNA using the four ribonucleoside triphosphates as substrates. This African swine fever virus (isolate Pig/Kenya/KEN-50/1950) (ASFV) protein is DNA-directed RNA polymerase RPB10 homolog.